The chain runs to 199 residues: Recombination protein RecR (199 aa).

Residues 57–72 (CTVCGHITDIDPCAIC) form a C4-type zinc finger. Residues 80-176 (TVVCVVQDSR…RVTRLAHGLP (97 aa)) form the Toprim domain.

This sequence belongs to the RecR family.

In terms of biological role, may play a role in DNA repair. It seems to be involved in an RecBC-independent recombinational process of DNA repair. It may act with RecF and RecO. The polypeptide is Recombination protein RecR (Exiguobacterium sp. (strain ATCC BAA-1283 / AT1b)).